We begin with the raw amino-acid sequence, 872 residues long: Alanine--tRNA ligase (872 aa).

4 residues coordinate Zn(2+): His-567, His-571, Cys-669, and His-673.

It belongs to the class-II aminoacyl-tRNA synthetase family. Zn(2+) is required as a cofactor.

The protein resides in the cytoplasm. It catalyses the reaction tRNA(Ala) + L-alanine + ATP = L-alanyl-tRNA(Ala) + AMP + diphosphate. Its function is as follows. Catalyzes the attachment of alanine to tRNA(Ala) in a two-step reaction: alanine is first activated by ATP to form Ala-AMP and then transferred to the acceptor end of tRNA(Ala). Also edits incorrectly charged Ser-tRNA(Ala) and Gly-tRNA(Ala) via its editing domain. The protein is Alanine--tRNA ligase of Streptococcus pyogenes serotype M12 (strain MGAS2096).